We begin with the raw amino-acid sequence, 205 residues long: Urease accessory protein UreE (205 aa).

The segment at 171-205 is disordered; that stretch reads AHEAHPHAHSHAGGHGHVHSGHGHGGKHGEHDAES. Residues 177-196 show a composition bias toward basic residues; the sequence is HAHSHAGGHGHVHSGHGHGG.

It belongs to the UreE family.

It localises to the cytoplasm. Functionally, involved in urease metallocenter assembly. Binds nickel. Probably functions as a nickel donor during metallocenter assembly. This is Urease accessory protein UreE from Bordetella parapertussis (strain 12822 / ATCC BAA-587 / NCTC 13253).